We begin with the raw amino-acid sequence, 496 residues long: Pup--protein ligase (496 aa).

Position 30 (Glu-30) interacts with Mg(2+). Arg-73 provides a ligand contact to ATP. Tyr-75 provides a ligand contact to Mg(2+). Asp-77 (proton acceptor) is an active-site residue. Glu-83 is a binding site for Mg(2+). ATP contacts are provided by Thr-86 and Trp-450.

This sequence belongs to the Pup ligase/Pup deamidase family. Pup-conjugating enzyme subfamily.

It catalyses the reaction ATP + [prokaryotic ubiquitin-like protein]-L-glutamate + [protein]-L-lysine = ADP + phosphate + N(6)-([prokaryotic ubiquitin-like protein]-gamma-L-glutamyl)-[protein]-L-lysine.. It participates in protein degradation; proteasomal Pup-dependent pathway. The protein operates within protein modification; protein pupylation. Its function is as follows. Catalyzes the covalent attachment of the prokaryotic ubiquitin-like protein modifier Pup to the proteasomal substrate proteins, thereby targeting them for proteasomal degradation. This tagging system is termed pupylation. The ligation reaction involves the side-chain carboxylate of the C-terminal glutamate of Pup and the side-chain amino group of a substrate lysine. The protein is Pup--protein ligase of Bifidobacterium animalis subsp. lactis (strain AD011).